A 152-amino-acid polypeptide reads, in one-letter code: 2-C-methyl-D-erythritol 2,4-cyclodiphosphate synthase (152 aa).

Residues aspartate 8 and histidine 10 each contribute to the a divalent metal cation site. 4-CDP-2-C-methyl-D-erythritol 2-phosphate-binding positions include 8-10 (DSH) and 34-35 (HS). Histidine 42 provides a ligand contact to a divalent metal cation. Residues 56–58 (DIG), 61–65 (FPDTD), 100–106 (LDRPKLG), and 131–135 (FKTSE) contribute to the 4-CDP-2-C-methyl-D-erythritol 2-phosphate site.

The protein belongs to the IspF family. In terms of assembly, homotrimer. It depends on a divalent metal cation as a cofactor.

It carries out the reaction 4-CDP-2-C-methyl-D-erythritol 2-phosphate = 2-C-methyl-D-erythritol 2,4-cyclic diphosphate + CMP. The protein operates within isoprenoid biosynthesis; isopentenyl diphosphate biosynthesis via DXP pathway; isopentenyl diphosphate from 1-deoxy-D-xylulose 5-phosphate: step 4/6. In terms of biological role, involved in the biosynthesis of isopentenyl diphosphate (IPP) and dimethylallyl diphosphate (DMAPP), two major building blocks of isoprenoid compounds. Catalyzes the conversion of 4-diphosphocytidyl-2-C-methyl-D-erythritol 2-phosphate (CDP-ME2P) to 2-C-methyl-D-erythritol 2,4-cyclodiphosphate (ME-CPP) with a corresponding release of cytidine 5-monophosphate (CMP). In Thermus thermophilus (strain ATCC 27634 / DSM 579 / HB8), this protein is 2-C-methyl-D-erythritol 2,4-cyclodiphosphate synthase.